The chain runs to 95 residues: Aspartyl/glutamyl-tRNA(Asn/Gln) amidotransferase subunit C (95 aa).

The protein belongs to the GatC family. As to quaternary structure, heterotrimer of A, B and C subunits.

The enzyme catalyses L-glutamyl-tRNA(Gln) + L-glutamine + ATP + H2O = L-glutaminyl-tRNA(Gln) + L-glutamate + ADP + phosphate + H(+). It carries out the reaction L-aspartyl-tRNA(Asn) + L-glutamine + ATP + H2O = L-asparaginyl-tRNA(Asn) + L-glutamate + ADP + phosphate + 2 H(+). Its function is as follows. Allows the formation of correctly charged Asn-tRNA(Asn) or Gln-tRNA(Gln) through the transamidation of misacylated Asp-tRNA(Asn) or Glu-tRNA(Gln) in organisms which lack either or both of asparaginyl-tRNA or glutaminyl-tRNA synthetases. The reaction takes place in the presence of glutamine and ATP through an activated phospho-Asp-tRNA(Asn) or phospho-Glu-tRNA(Gln). The protein is Aspartyl/glutamyl-tRNA(Asn/Gln) amidotransferase subunit C of Lysinibacillus sphaericus (strain C3-41).